Consider the following 132-residue polypeptide: NAD(P)H-quinone oxidoreductase subunit 3 (132 aa).

3 consecutive transmembrane segments (helical) span residues 22–42, 76–96, and 101–121; these read FLGFLIICSLVPVLALAASAL, MFALVFVIFDVETVFLYPWAV, and LGLLAFIEALIFIAILVVALV.

It belongs to the complex I subunit 3 family. As to quaternary structure, NDH-1 can be composed of about 15 different subunits; different subcomplexes with different compositions have been identified which probably have different functions.

The protein resides in the cellular thylakoid membrane. The enzyme catalyses a plastoquinone + NADH + (n+1) H(+)(in) = a plastoquinol + NAD(+) + n H(+)(out). The catalysed reaction is a plastoquinone + NADPH + (n+1) H(+)(in) = a plastoquinol + NADP(+) + n H(+)(out). Functionally, NDH-1 shuttles electrons from an unknown electron donor, via FMN and iron-sulfur (Fe-S) centers, to quinones in the respiratory and/or the photosynthetic chain. The immediate electron acceptor for the enzyme in this species is believed to be plastoquinone. Couples the redox reaction to proton translocation, and thus conserves the redox energy in a proton gradient. Cyanobacterial NDH-1 also plays a role in inorganic carbon-concentration. The polypeptide is NAD(P)H-quinone oxidoreductase subunit 3 (ndhC) (Thermosynechococcus vestitus (strain NIES-2133 / IAM M-273 / BP-1)).